A 284-amino-acid polypeptide reads, in one-letter code: RNase adapter protein RapZ (284 aa).

Glycine 8–serine 15 contributes to the ATP binding site. Aspartate 56–asparagine 59 is a binding site for GTP. The RNA-binding stretch occupies residues arginine 266–serine 284.

This sequence belongs to the RapZ-like family. RapZ subfamily. In terms of assembly, homotrimer.

Modulates the synthesis of GlmS, by affecting the processing and stability of the regulatory small RNA GlmZ. When glucosamine-6-phosphate (GlcN6P) concentrations are high in the cell, RapZ binds GlmZ and targets it to cleavage by RNase E. Consequently, GlmZ is inactivated and unable to activate GlmS synthesis. Under low GlcN6P concentrations, RapZ is sequestered and inactivated by an other regulatory small RNA, GlmY, preventing GlmZ degradation and leading to synthesis of GlmS. The sequence is that of RNase adapter protein RapZ from Erwinia tasmaniensis (strain DSM 17950 / CFBP 7177 / CIP 109463 / NCPPB 4357 / Et1/99).